A 219-amino-acid polypeptide reads, in one-letter code: Transmembrane emp24 domain-containing protein 10 (219 aa).

A signal peptide spans 1-31 (MSGSSGPQAQRGPCPFALLLLLLLGPSSVLA). Residues 1 to 142 (MSGSSGPQAQ…KNYEEIAKVE (142 aa)) are required for interaction with STX17. At 32–185 (ISFHLPVNSR…RDTNESTNTR (154 aa)) the chain is on the lumenal side. The 153-residue stretch at 41–193 (RKCLREEIHK…TRVLYFSIFS (153 aa)) folds into the GOLD domain. The segment at 147–178 (LEVELRRLEDLSESIVNDFAYMKKREEEMRDT) is required for TMED10 and TMED2 cis-Golgi network localization. Residues R171 and R176 each carry the dimethylated arginine modification. N-linked (GlcNAc...) asparagine glycosylation occurs at N179. Residues 186–206 (VLYFSIFSMFCLIGLATWQVF) traverse the membrane as a helical segment. Residues 204–219 (QVFYLRRFFKAKKLIE) form an interaction with COPG1 region. Residues 207–219 (YLRRFFKAKKLIE) are Cytoplasmic-facing. Positions 207–219 (YLRRFFKAKKLIE) are interaction with ARF1 and IL1B. Residues 211-212 (FF) carry the COPII vesicle coat-binding motif. A COPI vesicle coat-binding motif is present at residues 211 to 219 (FFKAKKLIE).

This sequence belongs to the EMP24/GP25L family. In terms of assembly, predominantly dimeric and to a lesser extent monomeric in the ER. Monomer and dimer in ERGIC and cis-Golgi network. Forms homooligomer (via GOLD domain); the assembly is promoted by direct binding with leaderless cargos and may form a protein channel that facilitates cargo entry into the ERGIC. Forms heterooligomeric complexes with other members of the p24 family such as TMED2, TMED7 and TMED9. Interacts (via GOLD domain) with TMED2 (via GOLD domain); the complex is required for export of TMED10 from the ER to the cis-Golgi network; the complex is proposed to be involved in cis-Golgi network dynamics and / or biogenesis. Associates with the COPI vesicle coat subunits (coatomer). Tetramerization of the cytoplasmic domain at the Golgi membrane in vitro; the complex is proposed to interact with COPI coatomer and induce budding of the vesicles. Interacts with COPG1; the interaction involves TMED10 homodimer. Interacts with ARF1 (GDP-bound); the interaction probably involves a TMED10 oligomer. Interacts with SEC23A, SEC24B, SEC24C and SEC24D components of the coat protein complex II/COPII, indicative of an association of TMED10 with the COPII vesicle coat. Interacts with CD59. Interacts with MPPE1/PGAP5; the complex might recruit and sort GPI-anchored proteins to the ER-exit site, or the interaction might lead to recycling of PGAP5 between the ER and the Golgi. Interacts with F2LR1/PAR2. Interacts with KDELR2/ERD2; the interaction is disrupted by KDELR2 ligand. Found in a complex composed at least of SURF4, TMED2 and TMED10. Associates with the presenilin-dependent gamma-secretase complex. Interacts with STX17; the interaction is direct. Interacts with IL-1; the interaction is direct. Interacts with RAB21 (active GTP-bound form); the interaction is indirect and regulates TMED10 abundance and localization at the Golgi.

It localises to the endoplasmic reticulum membrane. The protein resides in the endoplasmic reticulum-Golgi intermediate compartment membrane. It is found in the golgi apparatus membrane. The protein localises to the golgi apparatus. Its subcellular location is the cis-Golgi network membrane. It localises to the trans-Golgi network membrane. The protein resides in the cytoplasmic vesicle. It is found in the secretory vesicle membrane. The protein localises to the cell membrane. Its subcellular location is the melanosome. Cargo receptor involved in protein vesicular trafficking and quality control in the endoplasmic reticulum (ER) and Golgi. The p24 protein family is a group of transmembrane proteins that bind coat protein complex I/COPI and coat protein complex II/COPII involved in vesicular trafficking between the membranes. Acts at the lumenal side for incorporation of secretory cargo molecules into transport vesicles and involved in vesicle coat formation at the cytoplasmic side. Mainly functions in the early secretory pathway and cycles between the ER, ER-Golgi intermediate compartment (ERGIC) and Golgi, mediating cargo transport through COPI and COPII-coated vesicles. In COPII vesicle-mediated anterograde transport, involved in the transport of GPI-anchored proteins by acting together with TMED2 as their cargo receptor; the function specifically implies SEC24C and SEC24D of the COPII vesicle coat and lipid raft-like microdomains of the ER. Recognizes GPI anchors structural remodeled in the ER by the GPI inositol-deacylase/PGAP1 and the metallophosphoesterase MPPE1/PGAP5. In COPI vesicle-mediated retrograde transport, involved in the biogenesis of COPI vesicles and vesicle coat recruitment. Involved in trafficking of amyloid beta A4 protein and soluble APP-beta release (independent from the modulation of gamma-secretase activity). Involved in the KDELR2-mediated retrograde transport of the toxin A subunit (CTX-A-K63)together with COPI and the COOH terminus of KDELR2. On Golgi membranes, acts as a primary receptor for ARF1-GDP, a GTP-binding protein involved in COPI-vesicle formation. Increases coatomer-dependent GTPase-activating activity of ARFGAP2 which mediates the hydrolysis of ARF1-bound GTP and therefore modulates protein trafficking from the Golgi apparatus. Involved in the exocytic trafficking of G protein-coupled receptors F2LR1/PAR2 (trypsin and tryspin-like enzyme receptor), OPRM1 (opioid receptor) and P2RY4 (UTD and UDP receptor) from the Golgi to the plasma membrane, thus contributing to receptor resensitization. In addition to its cargo receptor activity, may also act as a protein channel after oligomerization, facilitating the post-translational entry of leaderless cytoplasmic cargo into the ERGIC. Involved in the translocation into ERGIC, the vesicle entry and the secretion of leaderless cargos (lacking the secretion signal sequence), including the mature form of interleukin 1/IL-1 family members, the alpha-crystallin B chain HSPB5, the carbohydrate-binding proteins galectin-1/LGALS1 and galectin-3/LGALS3, the microtubule-associated protein Tau/MAPT, and the annexin A1/ANXA1; the translocation process is dependent on cargo protein unfolding and enhanced by chaperones HSP90AB1 and HSP90B1/GRP9. Could also associates with the presenilin-dependent gamma-secretase complex in order to regulate gamma-cleavages of the amyloid beta A4 protein to yield amyloid-beta 40/Abeta40. The chain is Transmembrane emp24 domain-containing protein 10 (TMED10) from Bos taurus (Bovine).